Here is a 367-residue protein sequence, read N- to C-terminus: Trans-enoyl reductase ffsC (367 aa).

Residue 55–58 (CDWK) coordinates NADP(+). 143–150 (TGIGTLGL) provides a ligand contact to substrate. NADP(+)-binding positions include 203-206 (SAKN), Tyr221, and 268-269 (LE). 288-292 (GMAIL) is a binding site for substrate. 357–358 (VS) lines the NADP(+) pocket.

Belongs to the zinc-containing alcohol dehydrogenase family. Monomer.

Its pathway is mycotoxin biosynthesis. Its function is as follows. Trans-enoyl reductase; part of the gene cluster that mediates the biosynthesis of the cytotoxic leucine-containing cytochalasans, including aspochalasin C, aspochalasin E, TMC-169, flavichalasine F, aspergillin PZ, aspochalasin M and flavichalasine G. The first step in the pathway is catalyzed by the hybrid PKS-NRPS ffsA that utilizes 8 units of malonyl-CoA to iteratively assemble the octaketide chain before addition of L-leucine by the C-terminal NRPS modules. Because ffsA lacks a designated enoylreductase (ER) domain, the required activity is provided the enoyl reductase fssC. The methyltransferase (MT) domain of ffsA catalyzes the alpha-methylation at C10 and C14 using S-adenosyl-L-methionine as the methyl-donating cosubstrate. Reduction by the hydrolyase ffsE, followed by dehydration and intra-molecular Diels-Alder cyclization by the Diels-Alderase ffsF then yield the required isoindolone-fused macrocycle. A number of oxidative steps catalyzed by the tailoring cytochrome P450 monooxygenase ffsD, the FAD-linked oxidoreductase ffsJ and the short-chain dehydrogenase/reductase ffsI, are further required to afford the final products. The chain is Trans-enoyl reductase ffsC from Aspergillus flavipes.